Here is a 1399-residue protein sequence, read N- to C-terminus: Alpha-glucan water dikinase 1, chloroplastic (1399 aa).

The transit peptide at 1-75 (MSNSVVHNLL…GRPLSFVPRA (75 aa)) directs the protein to the chloroplast. V76 bears the N-acetylvaline mark. A disordered region spans residues 265–306 (LLKKDNSNESPKSNGTSSSGREEKKKVSKQPERKKNYNTDKI). The segment covering 272–283 (NESPKSNGTSSS) has biased composition (polar residues). The span at 284–306 (GREEKKKVSKQPERKKNYNTDKI) shows a compositional bias: basic and acidic residues. H1004 (tele-phosphohistidine intermediate) is an active-site residue.

This sequence belongs to the PEP-utilizing enzyme family. In terms of assembly, homodimer. Mg(2+) is required as a cofactor.

It is found in the plastid. The protein localises to the chloroplast. The enzyme catalyses [(1-&gt;4)-alpha-D-glucosyl](n) + n ATP + n H2O = [(1-&gt;4)-6-phospho-alpha-D-glucosyl](n) + n AMP + n phosphate + 2n H(+). Mediates the incorporation of phosphate into starch-like alpha-glucan, mostly at the C-6 position of glucose units. Acts as an overall regulator of starch mobilization. Required for starch degradation, suggesting that the phosphate content of starch regulates its degradability. This is Alpha-glucan water dikinase 1, chloroplastic from Arabidopsis thaliana (Mouse-ear cress).